The primary structure comprises 189 residues: L-2,4-diaminobutyric acid acetyltransferase (189 aa).

Residues 32 to 183 (ITIGKPTVED…DDHEAELTFR (152 aa)) form the N-acetyltransferase domain.

It belongs to the acetyltransferase family. EctA subfamily.

The catalysed reaction is L-2,4-diaminobutanoate + acetyl-CoA = (2S)-4-acetamido-2-aminobutanoate + CoA + H(+). It participates in amine and polyamine biosynthesis; ectoine biosynthesis; L-ectoine from L-aspartate 4-semialdehyde: step 2/3. Its function is as follows. Catalyzes the acetylation of L-2,4-diaminobutyrate (DABA) to gamma-N-acetyl-alpha,gamma-diaminobutyric acid (ADABA) with acetyl coenzyme A. In Halalkalibacterium halodurans (strain ATCC BAA-125 / DSM 18197 / FERM 7344 / JCM 9153 / C-125) (Bacillus halodurans), this protein is L-2,4-diaminobutyric acid acetyltransferase (ectA).